We begin with the raw amino-acid sequence, 544 residues long: Chaperonin GroEL (544 aa).

ATP contacts are provided by residues 29 to 32, 86 to 90, Gly-413, 478 to 480, and Asp-494; these read TIGP, DGTTT, and NAA.

This sequence belongs to the chaperonin (HSP60) family. As to quaternary structure, forms a cylinder of 14 subunits composed of two heptameric rings stacked back-to-back. Interacts with the co-chaperonin GroES.

It is found in the cytoplasm. It carries out the reaction ATP + H2O + a folded polypeptide = ADP + phosphate + an unfolded polypeptide.. Its function is as follows. Together with its co-chaperonin GroES, plays an essential role in assisting protein folding. The GroEL-GroES system forms a nano-cage that allows encapsulation of the non-native substrate proteins and provides a physical environment optimized to promote and accelerate protein folding. The polypeptide is Chaperonin GroEL (Exiguobacterium sp. (strain ATCC BAA-1283 / AT1b)).